The following is a 475-amino-acid chain: Bifunctional protein HldE (475 aa).

Positions 1–318 (MKITLPEFEK…ANALYTEQET (318 aa)) are ribokinase. 195 to 198 (NMSE) provides a ligand contact to ATP. Asp264 is a catalytic residue. A cytidylyltransferase region spans residues 344–475 (MTNGCFDILH…DIIKTIRERG (132 aa)).

The protein in the N-terminal section; belongs to the carbohydrate kinase PfkB family. In the C-terminal section; belongs to the cytidylyltransferase family. Homodimer.

The enzyme catalyses D-glycero-beta-D-manno-heptose 7-phosphate + ATP = D-glycero-beta-D-manno-heptose 1,7-bisphosphate + ADP + H(+). It catalyses the reaction D-glycero-beta-D-manno-heptose 1-phosphate + ATP + H(+) = ADP-D-glycero-beta-D-manno-heptose + diphosphate. It participates in nucleotide-sugar biosynthesis; ADP-L-glycero-beta-D-manno-heptose biosynthesis; ADP-L-glycero-beta-D-manno-heptose from D-glycero-beta-D-manno-heptose 7-phosphate: step 1/4. The protein operates within nucleotide-sugar biosynthesis; ADP-L-glycero-beta-D-manno-heptose biosynthesis; ADP-L-glycero-beta-D-manno-heptose from D-glycero-beta-D-manno-heptose 7-phosphate: step 3/4. In terms of biological role, catalyzes the phosphorylation of D-glycero-D-manno-heptose 7-phosphate at the C-1 position to selectively form D-glycero-beta-D-manno-heptose-1,7-bisphosphate. Its function is as follows. Catalyzes the ADP transfer from ATP to D-glycero-beta-D-manno-heptose 1-phosphate, yielding ADP-D-glycero-beta-D-manno-heptose. In Aeromonas hydrophila subsp. hydrophila (strain ATCC 7966 / DSM 30187 / BCRC 13018 / CCUG 14551 / JCM 1027 / KCTC 2358 / NCIMB 9240 / NCTC 8049), this protein is Bifunctional protein HldE.